Here is a 388-residue protein sequence, read N- to C-terminus: Deoxyuridine 5'-triphosphate nucleotidohydrolase (388 aa).

The segment covering 77–88 has biased composition (basic and acidic residues); that stretch reads EEKYDKEQHPGE. Disordered regions lie at residues 77 to 96 and 336 to 388; these read EEKY…SPLP and THTP…PRHP. A compositionally biased stretch (acidic residues) spans 351-363; that stretch reads VDDDVDETEEDEK.

This sequence belongs to the dUTPase family. Mg(2+) is required as a cofactor.

The enzyme catalyses dUTP + H2O = dUMP + diphosphate + H(+). Its pathway is pyrimidine metabolism; dUMP biosynthesis; dUMP from dCTP (dUTP route): step 2/2. Its function is as follows. Involved in nucleotide metabolism: produces dUMP, the immediate precursor of thymidine nucleotides and decreases the intracellular concentration of dUTP to avoid uracil incorporation into viral DNA. The chain is Deoxyuridine 5'-triphosphate nucleotidohydrolase from Homo sapiens (Human).